The chain runs to 469 residues: Tubulin gamma-2 chain (469 aa).

142-148 (AGGTGSG) serves as a coordination point for GTP.

The protein belongs to the tubulin family.

It localises to the cytoplasm. The protein localises to the cytoskeleton. It is found in the microtubule organizing center. Functionally, tubulin is the major constituent of microtubules. The gamma chain is found at microtubule organizing centers (MTOC) such as the spindle poles, suggesting that it is involved in the minus-end nucleation of microtubule assembly. This Oryza sativa subsp. japonica (Rice) protein is Tubulin gamma-2 chain (TUBG2).